A 222-amino-acid chain; its full sequence is MIITVDGPSGAGKGTLCYALAEKLGYALLDSGAIYRVTALAALQRKTDLTNETDLAELARHLDIQFIPQNGEVNIFLAGMDVSRLIRTQEVADAASKVAVFQKVRSALLQLQQDFAKNDGLIADGRDMGTVVFPNAQVKLFLDASAEERAKRRYKQLQNKGINGNFAQILAEIKERDFRDRNREVAPLKPADDAFYYSLNSSIISCAFFTISSEPTNSGTRS.

Residue 7 to 15 (GPSGAGKGT) coordinates ATP.

It belongs to the cytidylate kinase family. Type 1 subfamily.

The protein localises to the cytoplasm. It carries out the reaction CMP + ATP = CDP + ADP. It catalyses the reaction dCMP + ATP = dCDP + ADP. This chain is Cytidylate kinase 2, found in Haemophilus influenzae (strain ATCC 51907 / DSM 11121 / KW20 / Rd).